The following is a 722-amino-acid chain: Glycine--tRNA ligase beta subunit (722 aa).

Belongs to the class-II aminoacyl-tRNA synthetase family. In terms of assembly, tetramer of two alpha and two beta subunits.

It localises to the cytoplasm. The catalysed reaction is tRNA(Gly) + glycine + ATP = glycyl-tRNA(Gly) + AMP + diphosphate. This chain is Glycine--tRNA ligase beta subunit, found in Xylella fastidiosa (strain M12).